Here is a 553-residue protein sequence, read N- to C-terminus: Arginine--tRNA ligase (553 aa).

The short motif at 130–140 (ANPTGPVHLGG) is the 'HIGH' region element.

It belongs to the class-I aminoacyl-tRNA synthetase family. As to quaternary structure, monomer.

Its subcellular location is the cytoplasm. It carries out the reaction tRNA(Arg) + L-arginine + ATP = L-arginyl-tRNA(Arg) + AMP + diphosphate. In Saccharopolyspora erythraea (strain ATCC 11635 / DSM 40517 / JCM 4748 / NBRC 13426 / NCIMB 8594 / NRRL 2338), this protein is Arginine--tRNA ligase.